Here is a 493-residue protein sequence, read N- to C-terminus: Trans-aconitate decarboxylase 1 (493 aa).

Residues 1 to 22 are disordered; that stretch reads MAPALNANPTTKRDELSAPSAS.

It belongs to the class-II fumarase/aspartase family.

The protein resides in the cytoplasm. It localises to the cytosol. The protein localises to the nucleus. It carries out the reaction trans-aconitate + H(+) = itaconate + CO2. It functions in the pathway secondary metabolite biosynthesis. In terms of biological role, trans-aconitate decarboxylase; part of the gene cluster that mediates the biosynthesis of itaconic acid and 2-hydroxyparaconate. Cis-aconitate is secreted by the mitochondrial tricarboxylate transporter MTT1. In the cytosol cis-aconitate is converted into trans-aconitate via isomerization by the aconitate-delta-isomerase ADI1. Decarboxylation of trans-aconitate by the trans-aconitate decarboxylase TAD1 then leads then to the production of itaconic acid. The cytochrome P450 monooxygenase CYP3 further converts itaconate to 2-hydroxyparaconate via oxidation of the double bond, leading to a transient epoxide, which can subsequently be lactonized to produce 2-hydroxyparaconate. Secretion of itaconate and possibly 2-hydroxyparaconate into the medium is mediated by the major facilitator ITP1. The glyoxalase domain-containing protein RDO1 is not involved in the biosynthesis of itaconate and 2-hydroxyparaconate, however, it might play a role in the further conversion of 2-hydroxyparaconate to itatartarate. The polypeptide is Trans-aconitate decarboxylase 1 (Mycosarcoma maydis (Corn smut fungus)).